A 561-amino-acid polypeptide reads, in one-letter code: 2-succinyl-5-enolpyruvyl-6-hydroxy-3-cyclohexene-1-carboxylate synthase (561 aa).

This sequence belongs to the TPP enzyme family. MenD subfamily. In terms of assembly, homodimer. It depends on Mg(2+) as a cofactor. Mn(2+) serves as cofactor. Thiamine diphosphate is required as a cofactor.

The enzyme catalyses isochorismate + 2-oxoglutarate + H(+) = 5-enolpyruvoyl-6-hydroxy-2-succinyl-cyclohex-3-ene-1-carboxylate + CO2. Its pathway is quinol/quinone metabolism; 1,4-dihydroxy-2-naphthoate biosynthesis; 1,4-dihydroxy-2-naphthoate from chorismate: step 2/7. It participates in quinol/quinone metabolism; menaquinone biosynthesis. Functionally, catalyzes the thiamine diphosphate-dependent decarboxylation of 2-oxoglutarate and the subsequent addition of the resulting succinic semialdehyde-thiamine pyrophosphate anion to isochorismate to yield 2-succinyl-5-enolpyruvyl-6-hydroxy-3-cyclohexene-1-carboxylate (SEPHCHC). The sequence is that of 2-succinyl-5-enolpyruvyl-6-hydroxy-3-cyclohexene-1-carboxylate synthase from Proteus mirabilis (strain HI4320).